The chain runs to 307 residues: Protein Y (307 aa).

The protein belongs to the ATP-dependent AMP-binding enzyme family.

It participates in antibiotic biosynthesis; candicidin biosynthesis. In terms of biological role, may be a p-aminobenzoic acid-CoA ligase that activates PabA to start the biosynthesis of candicidin. This Streptomyces griseus protein is Protein Y.